A 276-amino-acid chain; its full sequence is Large ribosomal subunit protein uL2 (276 aa).

Residues 219–268 (TVRGSVMNPNDHPHGGGEGRQPVGRKSPMTPWGKPALGLKTRNKKAKSSK) form a disordered region.

It belongs to the universal ribosomal protein uL2 family. In terms of assembly, part of the 50S ribosomal subunit. Forms a bridge to the 30S subunit in the 70S ribosome.

Functionally, one of the primary rRNA binding proteins. Required for association of the 30S and 50S subunits to form the 70S ribosome, for tRNA binding and peptide bond formation. It has been suggested to have peptidyltransferase activity; this is somewhat controversial. Makes several contacts with the 16S rRNA in the 70S ribosome. The chain is Large ribosomal subunit protein uL2 from Lactococcus lactis subsp. cremoris (strain MG1363).